The primary structure comprises 113 residues: ATP-dependent Clp protease adapter protein ClpS (113 aa).

The protein belongs to the ClpS family. Binds to the N-terminal domain of the chaperone ClpA.

In terms of biological role, involved in the modulation of the specificity of the ClpAP-mediated ATP-dependent protein degradation. This is ATP-dependent Clp protease adapter protein ClpS from Corynebacterium diphtheriae (strain ATCC 700971 / NCTC 13129 / Biotype gravis).